The primary structure comprises 906 residues: Ribonucleoside-diphosphate reductase large subunit-like protein (906 aa).

2 disordered regions span residues 1-70 (MNPA…AGNT) and 89-129 (VSWR…LSTF). Positions 98–109 (PDGTPSVLSLTR) are enriched in polar residues.

This sequence belongs to the ribonucleoside diphosphate reductase large chain family.

It is found in the virion. Its subcellular location is the host cytoplasm. Its function is as follows. Does not possess a ribonucleotide reductase activity. Betaherpesviruses probably use another strategy to expand the dNTP pool in a quiescent host cell. This is Ribonucleoside-diphosphate reductase large subunit-like protein from Human cytomegalovirus (strain AD169) (HHV-5).